A 60-amino-acid chain; its full sequence is Metallothionein (60 aa).

The segment at 1–28 (MDPCECSKTGNCTCGGSCTCKNCSCTSC) is beta. Positions 4, 6, 12, 14, 18, 20, 23, 25, 28, 32, 33, 35, 36, 40, 43, 47, 49, 54, 58, and 59 each coordinate a divalent metal cation. The alpha stretch occupies residues 29–60 (KKSCCSCCPSGCSKCASGCVCKGKTCDTSCCQ).

The protein belongs to the metallothionein superfamily. Type 1 family.

Its function is as follows. Metallothioneins have a high content of cysteine residues that bind various heavy metals. The chain is Metallothionein (mt) from Gobiomorphus cotidianus (New Zealand common bully).